Reading from the N-terminus, the 721-residue chain is Mitogen-activated protein kinase 6 (721 aa).

Residue Met-1 forms a Peptide (Met-Gly) (interchain with G-Cter in ubiquitin) linkage. The Protein kinase domain maps to 20–316 (YMDLKPLGCG…AEEALSHPYM (297 aa)). Residues 26–34 (LGCGGNGLV) and Lys-49 each bind ATP. Asp-152 functions as the Proton acceptor in the catalytic mechanism. Ser-189 carries the phosphoserine; by PAK1, PAK2 and PAK3 modification. The SEG motif signature appears at 189-191 (SEG). The FRIEDE motif signature appears at 332–337 (FHIEDE). A phosphoserine mark is found at Ser-386, Ser-452, Ser-556, Ser-558, Ser-665, and Ser-684. The segment covering 701–715 (AMKSSPQIPHQTYSS) has biased composition (polar residues). A disordered region spans residues 701-721 (AMKSSPQIPHQTYSSILKHLN).

This sequence belongs to the protein kinase superfamily. CMGC Ser/Thr protein kinase family. MAP kinase subfamily. Heterodimer with ERK4/MAPK4. Interacts with (via FRIEDE motif) MAPKAPK5. Interacts with UBE3A; this interaction may be indirect and mediated by HERC2, possibly via HERC2 interaction with NEURL4. It depends on Mg(2+) as a cofactor. Phosphorylated at Ser-189 by PAK1, PAK2 and PAK3 resulting in catalytic activation. Phosphorylated by MAPKAPK5 at other sites. Post-translationally, ubiquitination at Met-1 leads to degradation by the proteasome pathway.

It is found in the cytoplasm. The protein localises to the nucleus. The catalysed reaction is L-seryl-[protein] + ATP = O-phospho-L-seryl-[protein] + ADP + H(+). The enzyme catalyses L-threonyl-[protein] + ATP = O-phospho-L-threonyl-[protein] + ADP + H(+). With respect to regulation, activated by phosphorylation at Ser-189. Its function is as follows. Atypical MAPK protein. Phosphorylates microtubule-associated protein 2 (MAP2) and MAPKAPK5. The precise role of the complex formed with MAPKAPK5 is still unclear, but the complex follows a complex set of phosphorylation events: upon interaction with atypical MAPKAPK5, ERK3/MAPK6 is phosphorylated at Ser-189 and then mediates phosphorylation and activation of MAPKAPK5, which in turn phosphorylates ERK3/MAPK6. May promote entry in the cell cycle. In Pongo abelii (Sumatran orangutan), this protein is Mitogen-activated protein kinase 6 (MAPK6).